Consider the following 406-residue polypeptide: Putative phosphate permease TK2061 (406 aa).

A run of 10 helical transmembrane segments spans residues A2–I22, A45–T65, T82–A102, I115–G135, Q139–F159, F182–G202, G208–L228, V288–T308, L324–L346, and F385–V405.

This sequence belongs to the inorganic phosphate transporter (PiT) (TC 2.A.20) family.

It localises to the cell membrane. Potential transporter for phosphate. This is Putative phosphate permease TK2061 from Thermococcus kodakarensis (strain ATCC BAA-918 / JCM 12380 / KOD1) (Pyrococcus kodakaraensis (strain KOD1)).